Here is a 300-residue protein sequence, read N- to C-terminus: GTPase Era (300 aa).

Residues 6–173 (KSGFLSIIGR…VDVLKEHLPE (168 aa)) form the Era-type G domain. The tract at residues 14-21 (GRPNVGKS) is G1. 14–21 (GRPNVGKS) is a binding site for GTP. Residues 40–44 (QTTRN) are G2. Positions 61-64 (DTPG) are G3. GTP-binding positions include 61 to 65 (DTPGI) and 123 to 126 (NKID). The G4 stretch occupies residues 123 to 126 (NKID). The interval 152 to 154 (ISA) is G5. The KH type-2 domain occupies 204–281 (TKEEVPHSIA…YLELWIKVKK (78 aa)).

It belongs to the TRAFAC class TrmE-Era-EngA-EngB-Septin-like GTPase superfamily. Era GTPase family. As to quaternary structure, monomer.

Its subcellular location is the cytoplasm. The protein localises to the cell membrane. An essential GTPase that binds both GDP and GTP, with rapid nucleotide exchange. Plays a role in 16S rRNA processing and 30S ribosomal subunit biogenesis and possibly also in cell cycle regulation and energy metabolism. The sequence is that of GTPase Era from Oceanobacillus iheyensis (strain DSM 14371 / CIP 107618 / JCM 11309 / KCTC 3954 / HTE831).